The chain runs to 223 residues: Sigma non-opioid intracellular receptor 1 (223 aa).

At 1–9 (MQWAAGRRW) the chain is on the lumenal side. The segment at 2–8 (QWAAGRR) is targeting to endoplasmic reticulum-associated lipid droplets. Residues 10-30 (AWITLFLTIVAVLIQAVWLWL) form a helical membrane-spanning segment. Residues 31 to 223 (GTQSFVFQRE…LTTYLFGQDS (193 aa)) lie on the Cytoplasmic side of the membrane. An important for ligand-binding region spans residues 99-106 (SLSEYVLL). Positions 177–223 (VIPSTLAFALSDTIFSTQDFLTLFYTLRAYARGLRLELTTYLFGQDS) are C-terminal hydrophobic region.

The protein belongs to the ERG2 family. In terms of assembly, homotrimer. Forms a ternary complex with ANK2 and ITPR3. The complex is disrupted by agonists. Interacts with KCNA4. Interacts with KCNA2; cocaine consumption leads to increased interaction. Interacts with RNF112 in an oxidative stress-regulated manner.

Its subcellular location is the nucleus inner membrane. It is found in the nucleus outer membrane. It localises to the nucleus envelope. The protein localises to the cytoplasmic vesicle. The protein resides in the endoplasmic reticulum membrane. Its subcellular location is the membrane. It is found in the lipid droplet. It localises to the cell junction. The protein localises to the cell membrane. The protein resides in the cell projection. Its subcellular location is the growth cone. It is found in the postsynaptic density membrane. In terms of biological role, functions in lipid transport from the endoplasmic reticulum and is involved in a wide array of cellular functions probably through regulation of the biogenesis of lipid microdomains at the plasma membrane. Involved in the regulation of different receptors it plays a role in BDNF signaling and EGF signaling. Also regulates ion channels like the potassium channel and could modulate neurotransmitter release. Plays a role in calcium signaling through modulation together with ANK2 of the ITP3R-dependent calcium efflux at the endoplasmic reticulum. Plays a role in several other cell functions including proliferation, survival and death. Originally identified for its ability to bind various psychoactive drugs it is involved in learning processes, memory and mood alteration. Necessary for proper mitochondrial axonal transport in motor neurons, in particular the retrograde movement of mitochondria. Plays a role in protecting cells against oxidative stress-induced cell death via its interaction with RNF112. The polypeptide is Sigma non-opioid intracellular receptor 1 (SIGMAR1) (Trichosurus vulpecula (Brush-tailed possum)).